The sequence spans 494 residues: Potassium voltage-gated channel subfamily A member 2 (494 aa).

A disordered region spans residues 1–25; it reads MTVATGDPSDEAAAHPGNPAEYDPD. The segment at 1–124 is tetramerization domain; that stretch reads MTVATGDPSD…YELGDEAIEL (124 aa). The Cytoplasmic portion of the chain corresponds to 1 to 159; the sequence is MTVATGDPSD…LLFEYPESSG (159 aa). A helical membrane pass occupies residues 160 to 181; sequence PARIIAIISVMVILISIVSFCL. At 182–216 the chain is on the extracellular side; sequence ETLPIFRNDDDEPHSVFDTNTNTTIYFTSTYFTDP. N203 is a glycosylation site (N-linked (GlcNAc...) asparagine). A helical membrane pass occupies residues 217–238; that stretch reads FFILETLCIIWFSFEFLVRLFA. The S-palmitoyl cysteine moiety is linked to residue C239. The Cytoplasmic segment spans residues 239-249; sequence CPSKSGFFGNV. Residues 250–270 traverse the membrane as a helical segment; that stretch reads MNIIDVVAIIPYFITLATELA. The Extracellular segment spans residues 271–284; sequence EKPEDGQAGQQAMS. The helical; Voltage-sensor transmembrane segment at 285 to 305 threads the bilayer; that stretch reads LAILRVIRLVRVFRIFKLSRH. The Cytoplasmic portion of the chain corresponds to 306–320; that stretch reads SKGLQILGQTLKASM. The interval 307–320 is S4-S5 linker; sequence KGLQILGQTLKASM. Residues 321–342 form a helical membrane-spanning segment; sequence RELGLLIFFLFIGVILFSSAVY. Topologically, residues 343–356 are extracellular; the sequence is FAEADEPESQFESI. The helical intramembrane region spans 357 to 368; the sequence is PDAFWWAVVSMT. The short motif at 369–374 is the Selectivity filter element; sequence TVGYGD. An intramembrane segment occupies 369–376; sequence TVGYGDMV. Over 377 to 383 the chain is Extracellular; it reads PTTIGGK. A helical transmembrane segment spans residues 384-412; the sequence is IVGSLCAIAGVLTIALPVPVIVSNFNYFY. Topologically, residues 413–494 are cytoplasmic; sequence HRETEGEEQA…VNITKMLTDV (82 aa). Positions 492-494 match the PDZ-binding motif; sequence TDV.

This sequence belongs to the potassium channel family. A (Shaker) (TC 1.A.1.2) subfamily. Kv1.2/KCNA2 sub-subfamily. In terms of assembly, homotetramer and heterotetramer with other family members. In terms of tissue distribution, expressed in oligodendrocytes.

It localises to the cell membrane. The catalysed reaction is K(+)(in) = K(+)(out). In terms of biological role, voltage-gated potassium channel that mediates transmembrane potassium transport in excitable membranes, primarily in the brain and central nervous system. Prevents aberrant action potential firing and regulates neuronal output. Forms tetrameric potassium-selective channels through which potassium ions pass in accordance with their electrochemical gradient. The channel alternates between opened and closed conformations in response to the voltage difference across the membrane. Can form functional homotetrameric channels and heterotetrameric channels with other family members; the channels characteristics depend critically on the types of channel-forming alpha subunits that are present. Channel properties are modulated by cytoplasmic beta subunits that regulate the subcellular location of the alpha subunits. In vivo, membranes probably contain a mixture of heteromeric potassium channel complexes, making it difficult to assign currents observed in intact tissues to any particular potassium channel family member. Homotetrameric KCNA2 forms a delayed-rectifier potassium channel that opens in response to membrane depolarization, followed by slow spontaneous channel closure. Regulates neuronal excitability and plays a role as pacemaker in the regulation of neuronal action potentials. KCNA2-containing channels play a presynaptic role and prevent hyperexcitability and aberrant action potential firing. Response to toxins that are selective for KCNA2-containing potassium channels suggests that in Purkinje cells, dendritic subthreshold KCNA2-containing potassium channels prevent random spontaneous calcium spikes, suppressing dendritic hyperexcitability without hindering the generation of somatic action potentials, and thereby play an important role in motor coordination. Plays a role in the induction of long-term potentiation of neuron excitability in the CA3 layer of the hippocampus. This is Potassium voltage-gated channel subfamily A member 2 (kcna2) from Oncorhynchus mykiss (Rainbow trout).